A 538-amino-acid chain; its full sequence is Methionine--tRNA ligase (538 aa).

The short motif at 21 to 31 (YYVNDAPHLGH) is the 'HIGH' region element. Zn(2+)-binding residues include Cys-137, Cys-140, Cys-162, and His-165. The 'KMSKS' region signature appears at 313 to 317 (KMSKS). Position 316 (Lys-316) interacts with ATP.

It belongs to the class-I aminoacyl-tRNA synthetase family. MetG type 2A subfamily. Monomer. Zn(2+) serves as cofactor.

Its subcellular location is the cytoplasm. The enzyme catalyses tRNA(Met) + L-methionine + ATP = L-methionyl-tRNA(Met) + AMP + diphosphate. Its function is as follows. Is required not only for elongation of protein synthesis but also for the initiation of all mRNA translation through initiator tRNA(fMet) aminoacylation. This is Methionine--tRNA ligase from Streptomyces coelicolor (strain ATCC BAA-471 / A3(2) / M145).